The chain runs to 148 residues: Ubiquitin-conjugating enzyme E2 5B (148 aa).

A UBC core domain is found at 1-147 (MASKRILKEL…ARSWTQKYAM (147 aa)). The active-site Glycyl thioester intermediate is the cysteine 85.

The protein belongs to the ubiquitin-conjugating enzyme family.

It carries out the reaction S-ubiquitinyl-[E1 ubiquitin-activating enzyme]-L-cysteine + [E2 ubiquitin-conjugating enzyme]-L-cysteine = [E1 ubiquitin-activating enzyme]-L-cysteine + S-ubiquitinyl-[E2 ubiquitin-conjugating enzyme]-L-cysteine.. The protein operates within protein modification; protein ubiquitination. Its function is as follows. E2 conjugating enzyme that associates with the E3 ubiquitin-protein ligase EL5 to mediate ubiquitination of target proteins. This Oryza sativa subsp. japonica (Rice) protein is Ubiquitin-conjugating enzyme E2 5B (UBC5B).